The primary structure comprises 1291 residues: MATNNTQNLRKSFAKTRSTVEYPDFLDIQVRSFKDFFQIDTPAENRFKEGLYKVFAENFPISDSRDNFILDFIDYNIDTPKYNVDECIDRGLTYAVPLKAKLRLTCNDKDNEDFQTIEQEVFLGNIPYMTERGSFVINGAERVIVSQLHRSPGVFFAQSKHTNGTKLYSARVIPFKGSWIEFATDVNNVMFAYIDRKKKFPVTTLLRAIGYGSDKDILDLFGLSEEVEATKANIKKAIGRKLAARVLRTWTEDFVDEDTGEVVSIDRNEVLLERDSIIKEEDINIIVESGSKSIILHREDVNIADYTIIYNTLQKDNSNSEKEAVEQIYRQLRNTDAPDEQTARDIIHNLFFSDKRYDLGEVGRYRINKKLGSGMGSEVKVLTKEDIINIVKYLIGLINSRAVVDDIDHLSNRRVRTMGEQLYSQFSVGLARMARTIKERMNVRDNEDFKPVDLINARTLSSVINSFFGTNQLSQFMDQTNPLAEITHKRRMSALGPGGLSRERAGFEVRDVHYTHYGRLCTIETPEGPNIGLISSLCVHAKVNSMGFIETPYRKVIDGIVDVKNQPVFLTAEEEDGAHIAQANAMYDDNGNFISDRIKARYEGDFPVIAPDKVDLIDIATNQIVSVAASLIPFLEHDDANRALMGSNMQRQAVPLLRPEAPIVGTGLERRVAMDSRTLLIAEADGVVEFVDANEIKMRYDLTDEDRLVSFDSDIITYSLIKFRRTNQDTCINLKPVIQHGERVKKGQVLCEGYATDKGELALGRNLMVAFMPWQGYNFEDAIVISEKVVRDDIFTSIHIEEFELEVRDTKRGEEELTSEIPNVSEEAVKNLDENGIIRTGAEIKEGDILIGKITPKGESDPTPEEKLLRAIFGDKAGDVKDASMKAPPSLRGVVIDTKLFSRPKKDKDLRIKSKKQVETIKGKYSKDLLALREQMIEKLAALLDGQTSQGVKHKFGDEVISKGVKFSRKNIEANVFPDKNPYRDESNYNVQEEANLLGDLIIDNWTSDKKINENVLRLVKNYLTKRNETAGKFKRERFTLEVGDELPAGIVQLAKVYIAKKRKLKVGDKMAGRHGNKGVVARIVRDEDMPFLEDGTPVDIVLNPLGVPSRMNIGQIYETLLGLAGKKLGRKYATPIFDGASEEEVINELRDAGLPTIGRTKLVDGLSGNPFDQPVTVGVIYMMKLGHLVDDKMHARSIGPYSLITQQPLGGKAQFGGQRFGEMEVWALEAFGAANILQEILTVKSDDVVGRAKTYECIVKGENLPRPNIPESFNVLVHELRGLALEITLH.

It belongs to the RNA polymerase beta chain family. The RNAP catalytic core consists of 2 alpha, 1 beta, 1 beta' and 1 omega subunit. When a sigma factor is associated with the core the holoenzyme is formed, which can initiate transcription.

The catalysed reaction is RNA(n) + a ribonucleoside 5'-triphosphate = RNA(n+1) + diphosphate. Its function is as follows. DNA-dependent RNA polymerase catalyzes the transcription of DNA into RNA using the four ribonucleoside triphosphates as substrates. This is DNA-directed RNA polymerase subunit beta from Cytophaga hutchinsonii (strain ATCC 33406 / DSM 1761 / CIP 103989 / NBRC 15051 / NCIMB 9469 / D465).